A 496-amino-acid polypeptide reads, in one-letter code: 6-phosphogluconate dehydrogenase, decarboxylating (496 aa).

Residues 13–18 (GLDVSI), 24–26 (DNV), 68–70 (ITH), and asparagine 96 each bind NADP(+). Substrate is bound by residues asparagine 96 and 122-124 (SGG). Catalysis depends on lysine 178, which acts as the Proton acceptor. Residue 181–182 (HN) coordinates substrate. Glutamate 185 acts as the Proton donor in catalysis. Substrate contacts are provided by arginine 300 and histidine 468. The disordered stretch occupies residues 476–496 (PGEDPGPVSKGPHHYEWRPAK).

This sequence belongs to the 6-phosphogluconate dehydrogenase family. As to quaternary structure, homodimer.

The protein localises to the cytoplasm. The enzyme catalyses 6-phospho-D-gluconate + NADP(+) = D-ribulose 5-phosphate + CO2 + NADPH. It functions in the pathway carbohydrate degradation; pentose phosphate pathway; D-ribulose 5-phosphate from D-glucose 6-phosphate (oxidative stage): step 3/3. Functionally, catalyzes the oxidative decarboxylation of 6-phosphogluconate to ribulose 5-phosphate and CO(2), with concomitant reduction of NADP to NADPH. The chain is 6-phosphogluconate dehydrogenase, decarboxylating from Emericella nidulans (strain FGSC A4 / ATCC 38163 / CBS 112.46 / NRRL 194 / M139) (Aspergillus nidulans).